The chain runs to 226 residues: 2-C-methyl-D-erythritol 4-phosphate cytidylyltransferase (226 aa).

Belongs to the IspD/TarI cytidylyltransferase family. IspD subfamily.

It carries out the reaction 2-C-methyl-D-erythritol 4-phosphate + CTP + H(+) = 4-CDP-2-C-methyl-D-erythritol + diphosphate. It functions in the pathway isoprenoid biosynthesis; isopentenyl diphosphate biosynthesis via DXP pathway; isopentenyl diphosphate from 1-deoxy-D-xylulose 5-phosphate: step 2/6. In terms of biological role, catalyzes the formation of 4-diphosphocytidyl-2-C-methyl-D-erythritol from CTP and 2-C-methyl-D-erythritol 4-phosphate (MEP). This is 2-C-methyl-D-erythritol 4-phosphate cytidylyltransferase from Bacillus thuringiensis (strain Al Hakam).